The following is a 125-amino-acid chain: UPF0102 protein PBPRA3228 (125 aa).

Belongs to the UPF0102 family.

The polypeptide is UPF0102 protein PBPRA3228 (Photobacterium profundum (strain SS9)).